Reading from the N-terminus, the 466-residue chain is Asparagine--tRNA ligase (466 aa).

It belongs to the class-II aminoacyl-tRNA synthetase family. Homodimer.

The protein resides in the cytoplasm. It carries out the reaction tRNA(Asn) + L-asparagine + ATP = L-asparaginyl-tRNA(Asn) + AMP + diphosphate + H(+). This is Asparagine--tRNA ligase from Psychromonas ingrahamii (strain DSM 17664 / CCUG 51855 / 37).